A 286-amino-acid chain; its full sequence is ATP synthase gamma chain (286 aa).

It belongs to the ATPase gamma chain family. In terms of assembly, F-type ATPases have 2 components, CF(1) - the catalytic core - and CF(0) - the membrane proton channel. CF(1) has five subunits: alpha(3), beta(3), gamma(1), delta(1), epsilon(1). CF(0) has three main subunits: a, b and c.

The protein localises to the cell inner membrane. Functionally, produces ATP from ADP in the presence of a proton gradient across the membrane. The gamma chain is believed to be important in regulating ATPase activity and the flow of protons through the CF(0) complex. This Marinomonas sp. (strain MWYL1) protein is ATP synthase gamma chain.